Here is a 219-residue protein sequence, read N- to C-terminus: Transmembrane protein 179B (219 aa).

4 helical membrane passes run 9-29 (VELL…ATLT), 65-85 (FVAG…FFWV), 98-118 (IGLR…LVSA), and 162-182 (LHTA…ALLL). S206 is subject to Phosphoserine.

The protein belongs to the TMEM179 family.

The protein resides in the membrane. In Mus musculus (Mouse), this protein is Transmembrane protein 179B (Tmem179b).